The sequence spans 564 residues: Putative ABC transporter ATP-binding protein PBPRA2240 (564 aa).

2 consecutive ABC transporter domains span residues 3–244 (IEFS…GIRE) and 299–533 (LTVN…ANLT). Residues 37-44 (GPSGSGKS) and 332-339 (GKNGSGKS) each bind ATP.

The protein belongs to the ABC transporter superfamily.

Its subcellular location is the cell inner membrane. Functionally, probably part of an ABC transporter complex. Responsible for energy coupling to the transport system. This chain is Putative ABC transporter ATP-binding protein PBPRA2240, found in Photobacterium profundum (strain SS9).